A 259-amino-acid polypeptide reads, in one-letter code: Indole-3-glycerol phosphate synthase (259 aa).

The protein belongs to the TrpC family.

The enzyme catalyses 1-(2-carboxyphenylamino)-1-deoxy-D-ribulose 5-phosphate + H(+) = (1S,2R)-1-C-(indol-3-yl)glycerol 3-phosphate + CO2 + H2O. It functions in the pathway amino-acid biosynthesis; L-tryptophan biosynthesis; L-tryptophan from chorismate: step 4/5. This Dehalococcoides mccartyi (strain CBDB1) protein is Indole-3-glycerol phosphate synthase.